The chain runs to 762 residues: 5-methyltetrahydropteroyltriglutamate--homocysteine methyltransferase (762 aa).

Residues 17 to 20 (REWK) and Lys111 contribute to the 5-methyltetrahydropteroyltri-L-glutamate site. L-homocysteine-binding positions include 435–437 (IGS) and Glu488. Residues 435 to 437 (IGS) and Glu488 each bind L-methionine. Residues 519 to 520 (RC) and Trp565 contribute to the 5-methyltetrahydropteroyltri-L-glutamate site. L-homocysteine is bound at residue Asp603. An L-methionine-binding site is contributed by Asp603. Glu609 is a 5-methyltetrahydropteroyltri-L-glutamate binding site. Positions 645, 647, and 669 each coordinate Zn(2+). His698 acts as the Proton donor in catalysis. Residue Cys730 coordinates Zn(2+).

Belongs to the vitamin-B12 independent methionine synthase family. The cofactor is Zn(2+).

The catalysed reaction is 5-methyltetrahydropteroyltri-L-glutamate + L-homocysteine = tetrahydropteroyltri-L-glutamate + L-methionine. The protein operates within amino-acid biosynthesis; L-methionine biosynthesis via de novo pathway; L-methionine from L-homocysteine (MetE route): step 1/1. Catalyzes the transfer of a methyl group from 5-methyltetrahydrofolate to homocysteine resulting in methionine formation. The protein is 5-methyltetrahydropteroyltriglutamate--homocysteine methyltransferase of Bacillus cereus (strain ATCC 14579 / DSM 31 / CCUG 7414 / JCM 2152 / NBRC 15305 / NCIMB 9373 / NCTC 2599 / NRRL B-3711).